Consider the following 332-residue polypeptide: Ketol-acid reductoisomerase (NADP(+)) (332 aa).

The 181-residue stretch at 2-182 (AKVYHDTEVS…GATRAGVLET (181 aa)) folds into the KARI N-terminal Rossmann domain. NADP(+)-binding positions include 25 to 28 (YGSQ), arginine 48, serine 53, and 83 to 86 (DTEQ). Histidine 108 is an active-site residue. An NADP(+)-binding site is contributed by glycine 134. Residues 183 to 328 (TFKEETETDL…KVLREMMPWL (146 aa)) form the KARI C-terminal knotted domain. 4 residues coordinate Mg(2+): aspartate 191, glutamate 195, glutamate 227, and glutamate 231. Position 252 (serine 252) interacts with substrate.

The protein belongs to the ketol-acid reductoisomerase family. Mg(2+) serves as cofactor.

It carries out the reaction (2R)-2,3-dihydroxy-3-methylbutanoate + NADP(+) = (2S)-2-acetolactate + NADPH + H(+). The catalysed reaction is (2R,3R)-2,3-dihydroxy-3-methylpentanoate + NADP(+) = (S)-2-ethyl-2-hydroxy-3-oxobutanoate + NADPH + H(+). It functions in the pathway amino-acid biosynthesis; L-isoleucine biosynthesis; L-isoleucine from 2-oxobutanoate: step 2/4. It participates in amino-acid biosynthesis; L-valine biosynthesis; L-valine from pyruvate: step 2/4. Involved in the biosynthesis of branched-chain amino acids (BCAA). Catalyzes an alkyl-migration followed by a ketol-acid reduction of (S)-2-acetolactate (S2AL) to yield (R)-2,3-dihydroxy-isovalerate. In the isomerase reaction, S2AL is rearranged via a Mg-dependent methyl migration to produce 3-hydroxy-3-methyl-2-ketobutyrate (HMKB). In the reductase reaction, this 2-ketoacid undergoes a metal-dependent reduction by NADPH to yield (R)-2,3-dihydroxy-isovalerate. This is Ketol-acid reductoisomerase (NADP(+)) from Dictyoglomus turgidum (strain DSM 6724 / Z-1310).